Consider the following 527-residue polypeptide: Anthranilate synthase component 1 1 (527 aa).

Position 52 (S52) interacts with L-tryptophan. Positions 53-72 (AEKTPASDPDGAFTPDTTTE) are disordered. 298–300 (PYM) contributes to the L-tryptophan binding site. Residue 333-334 (GT) coordinates chorismate. Mg(2+) is bound at residue E360. Residues Y448, R468, 486 to 488 (GAG), and G488 each bind chorismate. E501 is a Mg(2+) binding site.

The protein belongs to the anthranilate synthase component I family. In terms of assembly, tetramer of two components I and two components II. Requires Mg(2+) as cofactor.

The catalysed reaction is chorismate + L-glutamine = anthranilate + pyruvate + L-glutamate + H(+). The protein operates within amino-acid biosynthesis; L-tryptophan biosynthesis; L-tryptophan from chorismate: step 1/5. This is Anthranilate synthase component 1 1 (trpE1) from Halobacterium salinarum (strain ATCC 700922 / JCM 11081 / NRC-1) (Halobacterium halobium).